The chain runs to 92 residues: C-C motif chemokine 3 (92 aa).

Residues 1–19 (MKVPGAALAVLLCTMSLCS) form the signal peptide. 2 disulfide bridges follow: Cys33/Cys57 and Cys34/Cys73.

This sequence belongs to the intercrine beta (chemokine CC) family. Self-associates. Also heterodimer of MIP-1-alpha(4-69) and MIP-1-beta(3-69). Interacts with CCR1.

It localises to the secreted. Its function is as follows. Monokine with inflammatory and chemokinetic properties. Binds to CCR1, CCR4 and CCR5. One of the major HIV-suppressive factors produced by CD8+ T-cells. Recombinant MIP-1-alpha induces a dose-dependent inhibition of different strains of HIV-1, HIV-2, and simian immunodeficiency virus (SIV). This is C-C motif chemokine 3 (CCL3) from Canis lupus familiaris (Dog).